Reading from the N-terminus, the 410-residue chain is Multifunctional CCA protein (410 aa).

ATP is bound by residues Gly-8 and Arg-11. 2 residues coordinate CTP: Gly-8 and Arg-11. Glu-21 and Asp-23 together coordinate Mg(2+). Residues Arg-91, Arg-137, and Arg-140 each contribute to the ATP site. 3 residues coordinate CTP: Arg-91, Arg-137, and Arg-140. Residues 228–329 enclose the HD domain; that stretch reads TLLHQFLCLK…WKLFKSLDIL (102 aa).

This sequence belongs to the tRNA nucleotidyltransferase/poly(A) polymerase family. Bacterial CCA-adding enzyme type 1 subfamily. In terms of assembly, monomer. Can also form homodimers and oligomers. The cofactor is Mg(2+). Ni(2+) serves as cofactor.

The catalysed reaction is a tRNA precursor + 2 CTP + ATP = a tRNA with a 3' CCA end + 3 diphosphate. It catalyses the reaction a tRNA with a 3' CCA end + 2 CTP + ATP = a tRNA with a 3' CCACCA end + 3 diphosphate. Its function is as follows. Catalyzes the addition and repair of the essential 3'-terminal CCA sequence in tRNAs without using a nucleic acid template. Adds these three nucleotides in the order of C, C, and A to the tRNA nucleotide-73, using CTP and ATP as substrates and producing inorganic pyrophosphate. tRNA 3'-terminal CCA addition is required both for tRNA processing and repair. Also involved in tRNA surveillance by mediating tandem CCA addition to generate a CCACCA at the 3' terminus of unstable tRNAs. While stable tRNAs receive only 3'-terminal CCA, unstable tRNAs are marked with CCACCA and rapidly degraded. The protein is Multifunctional CCA protein of Alcanivorax borkumensis (strain ATCC 700651 / DSM 11573 / NCIMB 13689 / SK2).